The sequence spans 1087 residues: Exportin-7 (1087 aa).

An N-acetylalanine modification is found at Ala-2. One can recognise an Importin N-terminal domain in the interval 30-96; that stretch reads AEKALVEFTN…RNYVLNYLAT (67 aa). Ser-570 is modified (phosphoserine).

This sequence belongs to the exportin family. In terms of assembly, binds to nucleoporins. Found in a complex with XPO7, EIF4A1, ARHGAP1, VPS26A, VPS29, VPS35 and SFN. Interacts with ARHGAP1 and SFN. Interacts with Ran and cargo proteins in a GTP-dependent manner.

It is found in the cytoplasm. The protein resides in the nucleus. The protein localises to the nuclear pore complex. In terms of biological role, mediates the nuclear export of proteins (cargos) with broad substrate specificity. In the nucleus binds cooperatively to its cargo and to the GTPase Ran in its active GTP-bound form. Docking of this trimeric complex to the nuclear pore complex (NPC) is mediated through binding to nucleoporins. Upon transit of a nuclear export complex into the cytoplasm, disassembling of the complex and hydrolysis of Ran-GTP to Ran-GDP (induced by RANBP1 and RANGAP1, respectively) cause release of the cargo from the export receptor. XPO7 then return to the nuclear compartment and mediate another round of transport. The directionality of nuclear export is thought to be conferred by an asymmetric distribution of the GTP- and GDP-bound forms of Ran between the cytoplasm and nucleus. The polypeptide is Exportin-7 (XPO7) (Pongo abelii (Sumatran orangutan)).